The following is a 443-amino-acid chain: uncharacterized protein (443 aa).

Catalysis depends on proton acceptor residues H164 and D386.

This sequence belongs to the plant acyltransferase family.

This is an uncharacterized protein from Arabidopsis thaliana (Mouse-ear cress).